The following is a 122-amino-acid chain: Large ribosomal subunit protein uL14 (122 aa).

The protein belongs to the universal ribosomal protein uL14 family. Part of the 50S ribosomal subunit. Forms a cluster with proteins L3 and L19. In the 70S ribosome, L14 and L19 interact and together make contacts with the 16S rRNA in bridges B5 and B8.

Binds to 23S rRNA. Forms part of two intersubunit bridges in the 70S ribosome. This is Large ribosomal subunit protein uL14 from Halothermothrix orenii (strain H 168 / OCM 544 / DSM 9562).